The primary structure comprises 173 residues: Crossover junction endodeoxyribonuclease RuvC (173 aa).

Residues Asp-8, Glu-67, and Asp-139 contribute to the active site. Positions 8, 67, and 139 each coordinate Mg(2+).

It belongs to the RuvC family. In terms of assembly, homodimer which binds Holliday junction (HJ) DNA. The HJ becomes 2-fold symmetrical on binding to RuvC with unstacked arms; it has a different conformation from HJ DNA in complex with RuvA. In the full resolvosome a probable DNA-RuvA(4)-RuvB(12)-RuvC(2) complex forms which resolves the HJ. Requires Mg(2+) as cofactor.

It is found in the cytoplasm. It catalyses the reaction Endonucleolytic cleavage at a junction such as a reciprocal single-stranded crossover between two homologous DNA duplexes (Holliday junction).. Functionally, the RuvA-RuvB-RuvC complex processes Holliday junction (HJ) DNA during genetic recombination and DNA repair. Endonuclease that resolves HJ intermediates. Cleaves cruciform DNA by making single-stranded nicks across the HJ at symmetrical positions within the homologous arms, yielding a 5'-phosphate and a 3'-hydroxyl group; requires a central core of homology in the junction. The consensus cleavage sequence is 5'-(A/T)TT(C/G)-3'. Cleavage occurs on the 3'-side of the TT dinucleotide at the point of strand exchange. HJ branch migration catalyzed by RuvA-RuvB allows RuvC to scan DNA until it finds its consensus sequence, where it cleaves and resolves the cruciform DNA. Its function is as follows. Plays a role in recovery after DNA ADP-ribosylation, probably via replication fork reversal. This Escherichia coli O127:H6 (strain E2348/69 / EPEC) protein is Crossover junction endodeoxyribonuclease RuvC.